A 310-amino-acid polypeptide reads, in one-letter code: Porphobilinogen deaminase (310 aa).

Residue C242 is modified to S-(dipyrrolylmethanemethyl)cysteine.

This sequence belongs to the HMBS family. Monomer. It depends on dipyrromethane as a cofactor.

It catalyses the reaction 4 porphobilinogen + H2O = hydroxymethylbilane + 4 NH4(+). It participates in porphyrin-containing compound metabolism; protoporphyrin-IX biosynthesis; coproporphyrinogen-III from 5-aminolevulinate: step 2/4. Its function is as follows. Tetrapolymerization of the monopyrrole PBG into the hydroxymethylbilane pre-uroporphyrinogen in several discrete steps. The sequence is that of Porphobilinogen deaminase from Shewanella pealeana (strain ATCC 700345 / ANG-SQ1).